Consider the following 538-residue polypeptide: Bifunctional purine biosynthesis protein PurH (538 aa).

In terms of domain architecture, MGS-like spans 6–158; the sequence is KHIPAPDLHR…KNHAYVATVV (153 aa).

Belongs to the PurH family.

The enzyme catalyses (6R)-10-formyltetrahydrofolate + 5-amino-1-(5-phospho-beta-D-ribosyl)imidazole-4-carboxamide = 5-formamido-1-(5-phospho-D-ribosyl)imidazole-4-carboxamide + (6S)-5,6,7,8-tetrahydrofolate. The catalysed reaction is IMP + H2O = 5-formamido-1-(5-phospho-D-ribosyl)imidazole-4-carboxamide. It participates in purine metabolism; IMP biosynthesis via de novo pathway; 5-formamido-1-(5-phospho-D-ribosyl)imidazole-4-carboxamide from 5-amino-1-(5-phospho-D-ribosyl)imidazole-4-carboxamide (10-formyl THF route): step 1/1. It functions in the pathway purine metabolism; IMP biosynthesis via de novo pathway; IMP from 5-formamido-1-(5-phospho-D-ribosyl)imidazole-4-carboxamide: step 1/1. In Brucella ovis (strain ATCC 25840 / 63/290 / NCTC 10512), this protein is Bifunctional purine biosynthesis protein PurH.